A 122-amino-acid chain; its full sequence is Toxin CSTX-1 (122 aa).

The signal sequence occupies residues 1–20 (MKVLIISAVLFITIFSNISA). The propeptide occupies 21–47 (EIEDDFLEDESFEAEDIIPFFENEQAR). Disulfide bonds link Cys-49–Cys-64, Cys-56–Cys-73, Cys-63–Cys-91, and Cys-75–Cys-89. The interval 99 to 112 (AIETGLNIFRGLFK) is predicted alpha-helix. Position 108 is an arginine amide; in CSTX-2a (Arg-108). At Lys-121 the chain carries Lysine amide; in omega-ctenitoxin-Cs1a.

It belongs to the neurotoxin 19 (CSTX) family. 04 (U1-Lctx) subfamily. As to quaternary structure, monomer. Interacts with CSTX-13 (AC P83919) (Kd=430 nM), but does not interact with CSTX-9 (AC P58604). In terms of tissue distribution, expressed by the venom gland.

It localises to the secreted. It is found in the target cell membrane. Its function is as follows. Spider venom toxin that shows calcium channel blocking activity and exhibits cytolytic activity by affecting the outer leaflet curvature and/or pore formation across the membrane. It blocks L-type calcium channels (Cav1/CACNA1) in mammalian neurons at nanomolar concentrations. Furthermore, it produces a slow voltage-independent block of mid/low and high voltage-activated calcium channels in cockroach neurons. Potassium ions, histamine, M-ctenitoxin-Cs1a (AC P83619), CSTX-9 (AC P58604), and CSTX-13 (AC P83919) synergistically increase the insecticidal activity of this toxin. In vivo, it causes paralysis in blow flies and provokes death in drosophila. Blocks voltage-activated calcium channels (Cav). Does not induce cell membrane permeability increase when tested on Xenopus oocytes. No alpha-helical structures are detectable. Is 7-fold less neurotoxic than omega-ctenitoxin-Cs1a on drosophila flies. In terms of biological role, blocks voltage-activated calcium channels (Cav). Is 190-fold less neurotoxic than omega-ctenitoxin-Cs1a on drosophila flies. This is Toxin CSTX-1 from Cupiennius salei (American wandering spider).